The following is an 883-amino-acid chain: Pyruvate, phosphate dikinase 2 (883 aa).

The tract at residues 1–21 (MAPAPCGRSSQRVFHFGKGKS) is disordered. His465 functions as the Tele-phosphohistidine intermediate in the catalytic mechanism. The substrate site is built by Arg571, Arg628, Glu757, Gly778, Thr779, Asn780, and Asp781. Glu757 lines the Mg(2+) pocket. Asp781 provides a ligand contact to Mg(2+). Cys843 serves as the catalytic Proton donor.

The protein belongs to the PEP-utilizing enzyme family. The cofactor is Mg(2+). In terms of tissue distribution, expressed in leaves, roots and stems.

It localises to the cytoplasm. The enzyme catalyses pyruvate + phosphate + ATP = phosphoenolpyruvate + AMP + diphosphate + H(+). Formation of phosphoenolpyruvate, which is the primary acceptor of CO(2) in C4 and some Crassulacean acid metabolism plants. This chain is Pyruvate, phosphate dikinase 2, found in Zea mays (Maize).